The chain runs to 360 residues: DNA replication and repair protein RecF (360 aa).

Residue 30–37 coordinates ATP; the sequence is GRNAQGKT.

It belongs to the RecF family.

It localises to the cytoplasm. In terms of biological role, the RecF protein is involved in DNA metabolism; it is required for DNA replication and normal SOS inducibility. RecF binds preferentially to single-stranded, linear DNA. It also seems to bind ATP. This Desulforudis audaxviator (strain MP104C) protein is DNA replication and repair protein RecF.